We begin with the raw amino-acid sequence, 283 residues long: Protein/nucleic acid deglycase HchA (283 aa).

Residues His86, Glu91, and His123 each contribute to the Zn(2+) site. The Nucleophile role is filled by Cys185.

It belongs to the peptidase C56 family. HchA subfamily. As to quaternary structure, homodimer.

Its subcellular location is the cytoplasm. It catalyses the reaction N(omega)-(1-hydroxy-2-oxopropyl)-L-arginyl-[protein] + H2O = lactate + L-arginyl-[protein] + H(+). The enzyme catalyses N(6)-(1-hydroxy-2-oxopropyl)-L-lysyl-[protein] + H2O = lactate + L-lysyl-[protein] + H(+). It carries out the reaction S-(1-hydroxy-2-oxopropyl)-L-cysteinyl-[protein] + H2O = lactate + L-cysteinyl-[protein] + H(+). The catalysed reaction is N(omega)-(1-hydroxy-2-oxoethyl)-L-arginyl-[protein] + H2O = L-arginyl-[protein] + glycolate + H(+). It catalyses the reaction N(6)-(1-hydroxy-2-oxoethyl)-L-lysyl-[protein] + H2O = glycolate + L-lysyl-[protein] + H(+). The enzyme catalyses S-(1-hydroxy-2-oxoethyl)-L-cysteinyl-[protein] + H2O = glycolate + L-cysteinyl-[protein] + H(+). It carries out the reaction N(2)-(1-hydroxy-2-oxopropyl)-dGTP + H2O = lactate + dGTP + H(+). The catalysed reaction is N(2)-(1-hydroxy-2-oxopropyl)-GTP + H2O = lactate + GTP + H(+). It catalyses the reaction N(2)-(1-hydroxy-2-oxopropyl)-GDP + H2O = lactate + GDP + H(+). The enzyme catalyses N(2)-(1-hydroxy-2-oxopropyl)-GMP + H2O = lactate + GMP + H(+). It carries out the reaction N(2)-(1-hydroxy-2-oxoethyl)-dGTP + H2O = dGTP + glycolate + H(+). The catalysed reaction is N(2)-(1-hydroxy-2-oxoethyl)-GTP + H2O = glycolate + GTP + H(+). It catalyses the reaction N(2)-(1-hydroxy-2-oxoethyl)-GDP + H2O = glycolate + GDP + H(+). The enzyme catalyses N(2)-(1-hydroxy-2-oxoethyl)-GMP + H2O = glycolate + GMP + H(+). It carries out the reaction an N(2)-(1-hydroxy-2-oxopropyl)-guanosine in RNA + H2O = a guanosine in RNA + lactate + H(+). The catalysed reaction is an N(2)-(1-hydroxy-2-oxopropyl)-2'-deoxyguanosine in DNA + H2O = a 2'-deoxyguanosine in DNA + lactate + H(+). It catalyses the reaction an N(2)-(1-hydroxy-2-oxoethyl)-guanosine in RNA + H2O = a guanosine in RNA + glycolate + H(+). The enzyme catalyses an N(2)-(1-hydroxy-2-oxoethyl)-2'-deoxyguanosine in DNA + H2O = a 2'-deoxyguanosine in DNA + glycolate + H(+). Functionally, protein and nucleotide deglycase that catalyzes the deglycation of the Maillard adducts formed between amino groups of proteins or nucleotides and reactive carbonyl groups of glyoxals. Thus, functions as a protein deglycase that repairs methylglyoxal- and glyoxal-glycated proteins, and releases repaired proteins and lactate or glycolate, respectively. Deglycates cysteine, arginine and lysine residues in proteins, and thus reactivates these proteins by reversing glycation by glyoxals. Acts on early glycation intermediates (hemithioacetals and aminocarbinols), preventing the formation of Schiff bases and advanced glycation endproducts (AGE). Also functions as a nucleotide deglycase able to repair glycated guanine in the free nucleotide pool (GTP, GDP, GMP, dGTP) and in DNA and RNA. Is thus involved in a major nucleotide repair system named guanine glycation repair (GG repair), dedicated to reversing methylglyoxal and glyoxal damage via nucleotide sanitization and direct nucleic acid repair. Plays an important role in protecting cells from carbonyl stress. This Escherichia coli O139:H28 (strain E24377A / ETEC) protein is Protein/nucleic acid deglycase HchA.